The chain runs to 155 residues: Methylated-DNA--protein-cysteine methyltransferase (155 aa).

Cysteine 119 serves as the catalytic Nucleophile; methyl group acceptor.

This sequence belongs to the MGMT family.

It localises to the cytoplasm. The catalysed reaction is a 6-O-methyl-2'-deoxyguanosine in DNA + L-cysteinyl-[protein] = S-methyl-L-cysteinyl-[protein] + a 2'-deoxyguanosine in DNA. It carries out the reaction a 4-O-methyl-thymidine in DNA + L-cysteinyl-[protein] = a thymidine in DNA + S-methyl-L-cysteinyl-[protein]. Its function is as follows. Involved in the cellular defense against the biological effects of O6-methylguanine (O6-MeG) and O4-methylthymine (O4-MeT) in DNA. Repairs the methylated nucleobase in DNA by stoichiometrically transferring the methyl group to a cysteine residue in the enzyme. This is a suicide reaction: the enzyme is irreversibly inactivated. This is Methylated-DNA--protein-cysteine methyltransferase from Sulfolobus acidocaldarius (strain ATCC 33909 / DSM 639 / JCM 8929 / NBRC 15157 / NCIMB 11770).